Consider the following 1036-residue polypeptide: Isoleucine--tRNA ligase (1036 aa).

Residues 46–56 (PFATGLPHYGH) carry the 'HIGH' region motif. The 'KMSKS' region motif lies at 589 to 593 (KMSKR). Lysine 592 lines the ATP pocket.

This sequence belongs to the class-I aminoacyl-tRNA synthetase family. IleS type 2 subfamily. In terms of assembly, monomer. Zn(2+) is required as a cofactor.

The protein localises to the cytoplasm. It catalyses the reaction tRNA(Ile) + L-isoleucine + ATP = L-isoleucyl-tRNA(Ile) + AMP + diphosphate. Catalyzes the attachment of isoleucine to tRNA(Ile). As IleRS can inadvertently accommodate and process structurally similar amino acids such as valine, to avoid such errors it has two additional distinct tRNA(Ile)-dependent editing activities. One activity is designated as 'pretransfer' editing and involves the hydrolysis of activated Val-AMP. The other activity is designated 'posttransfer' editing and involves deacylation of mischarged Val-tRNA(Ile). The chain is Isoleucine--tRNA ligase from Chlamydia muridarum (strain MoPn / Nigg).